Consider the following 682-residue polypeptide: Potassium-transporting ATPase ATP-binding subunit (682 aa).

A run of 4 helical transmembrane segments spans residues 34 to 54, 58 to 78, 219 to 239, and 254 to 274; these read PVMF…LAMV, IAGS…TVLF, IALT…TATL, and VLVA…LSAI. D307 acts as the 4-aspartylphosphate intermediate in catalysis. ATP-binding positions include D344, E348, 377–384, and K395; that span reads FTAQSRMS. Positions 518 and 522 each coordinate Mg(2+). 3 consecutive transmembrane segments (helical) span residues 588 to 608, 616 to 636, and 662 to 682; these read FAII…LNVM, AILS…PLAL, and LVVP…LGLA.

Belongs to the cation transport ATPase (P-type) (TC 3.A.3) family. Type IA subfamily. As to quaternary structure, the system is composed of three essential subunits: KdpA, KdpB and KdpC.

It is found in the cell inner membrane. The enzyme catalyses K(+)(out) + ATP + H2O = K(+)(in) + ADP + phosphate + H(+). Its function is as follows. Part of the high-affinity ATP-driven potassium transport (or Kdp) system, which catalyzes the hydrolysis of ATP coupled with the electrogenic transport of potassium into the cytoplasm. This subunit is responsible for energy coupling to the transport system and for the release of the potassium ions to the cytoplasm. This chain is Potassium-transporting ATPase ATP-binding subunit, found in Salmonella newport (strain SL254).